Consider the following 233-residue polypeptide: MSSSSSMECTGNMSAAPLLVLTVAVLAVLASTCAADPEPIQDFCVAVPRAGGEASPAYPGFPCKPASAVVSDDFFFAGLAAAGSTDNPFGASLKPGNVEAFPALNTLGVAINRVDLAPGGVNPLHSHPRAAELVHVITGRMLVGFVSTAGKYYSKVVGEGETFAIPRGLMHFQYNPGNASARAMTVFNSQLPGVVPAATALFGADPEIPDAVLAKSFQVDAEIIKLLKSKFKK.

Residues 1–35 (MSSSSSMECTGNMSAAPLLVLTVAVLAVLASTCAA) form the signal peptide. A disulfide bridge connects residues C44 and C63. The region spanning 77–225 (AGLAAAGSTD…SFQVDAEIIK (149 aa)) is the Cupin type-1 domain. Mn(2+) is bound by residues H125, H127, E132, and H171. N178 carries N-linked (GlcNAc...) asparagine glycosylation.

Belongs to the germin family. In terms of assembly, oligomer (believed to be a pentamer but probably hexamer).

It localises to the secreted. It is found in the extracellular space. The protein resides in the apoplast. May play a role in plant defense. Probably has no oxalate oxidase activity even if the active site is conserved. This chain is Germin-like protein 3-7 (GER7), found in Oryza sativa subsp. japonica (Rice).